Reading from the N-terminus, the 254-residue chain is Probable triosephosphate isomerase 2 (254 aa).

Residue 9 to 11 (NMK) coordinates substrate. The active-site Electrophile is His96. Glu168 serves as the catalytic Proton acceptor. 2 residues coordinate substrate: Gly174 and Ser212.

It belongs to the triosephosphate isomerase family. Homodimer.

It localises to the cytoplasm. It carries out the reaction D-glyceraldehyde 3-phosphate = dihydroxyacetone phosphate. It functions in the pathway carbohydrate biosynthesis; gluconeogenesis. The protein operates within carbohydrate degradation; glycolysis; D-glyceraldehyde 3-phosphate from glycerone phosphate: step 1/1. Its function is as follows. Involved in the gluconeogenesis. Catalyzes stereospecifically the conversion of dihydroxyacetone phosphate (DHAP) to D-glyceraldehyde-3-phosphate (G3P). This chain is Probable triosephosphate isomerase 2, found in Listeria monocytogenes serotype 4b (strain F2365).